Consider the following 389-residue polypeptide: MDLFEYQAKELFAKHEVPTSAGRVTDTVAGAREIAEEIGKPVMVKAQVKVGGRGKAGGVKYSADADAAQANAEAILGLDIKGHVVKKLLVAEASDIAEEYYISFLLDRTNRTYLAMCSVEGGVEIEVTAEENPDALAKIPVDAVKGVDLAFARSIAEAGKLPAEVLDAAAVTIQKLWEVFINEDALLVEVNPLVRTPDDQILALDGKVTLDENAAFRQPGHEAFEDKDATDPLELKAKENDLNYVKLDGEVGIIGNGAGLVMSTLDVVAYAGEKHGGVKPANFLDIGGGASAEVMANGLDVILNDAQVKSVFVNVFGGITACDAVANGIVGALKTLGDEANKPLVVRLDGNNVEEGRRILAEAAHPLVTVVGTMDEAADKAAELAFAAK.

Positions 9-236 constitute an ATP-grasp domain; it reads KELFAKHEVP…KDATDPLELK (228 aa). ATP contacts are provided by residues K45, 52-54, S94, and E99; that span reads GRG. Mg(2+)-binding residues include N191 and D205. Substrate-binding positions include N256 and 318–320; that span reads GIT.

This sequence belongs to the succinate/malate CoA ligase beta subunit family. Heterotetramer of two alpha and two beta subunits. The cofactor is Mg(2+).

It carries out the reaction succinate + ATP + CoA = succinyl-CoA + ADP + phosphate. The catalysed reaction is GTP + succinate + CoA = succinyl-CoA + GDP + phosphate. It participates in carbohydrate metabolism; tricarboxylic acid cycle; succinate from succinyl-CoA (ligase route): step 1/1. Its function is as follows. Succinyl-CoA synthetase functions in the citric acid cycle (TCA), coupling the hydrolysis of succinyl-CoA to the synthesis of either ATP or GTP and thus represents the only step of substrate-level phosphorylation in the TCA. The beta subunit provides nucleotide specificity of the enzyme and binds the substrate succinate, while the binding sites for coenzyme A and phosphate are found in the alpha subunit. The chain is Succinate--CoA ligase [ADP-forming] subunit beta from Rhodococcus jostii (strain RHA1).